The chain runs to 93 residues: uncharacterized protein (93 aa).

Residues 35–72 (KSVPPPTPPKPVKKTPSPTLPKPSKQKQEPQVEVNEDR) are disordered. The segment covering 60-72 (QKQEPQVEVNEDR) has biased composition (basic and acidic residues).

This is an uncharacterized protein from Ostreid herpesvirus 1 (isolate France) (OsHV-1).